Reading from the N-terminus, the 523-residue chain is Glucose-1-phosphate adenylyltransferase large subunit 1, chloroplastic/amyloplastic (523 aa).

The transit peptide at 1 to 49 directs the protein to the chloroplast; sequence MSSMQFSSVLPLEGKACVSPVRREGSACERLKIGDSSSIRHERASRRMC.

It belongs to the bacterial/plant glucose-1-phosphate adenylyltransferase family. In terms of assembly, heterotetramer. In terms of tissue distribution, starchy endosperm and roots.

It localises to the plastid. Its subcellular location is the chloroplast. It is found in the amyloplast. It catalyses the reaction alpha-D-glucose 1-phosphate + ATP + H(+) = ADP-alpha-D-glucose + diphosphate. It functions in the pathway glycan biosynthesis; starch biosynthesis. With respect to regulation, highly active without 3'phosphoglycerate, and is only slightly affected by the activator 3'phosphoglycerate and inhibitor orthophosphate. Functionally, this protein plays a role in synthesis of starch. It catalyzes the synthesis of the activated glycosyl donor, ADP-glucose from Glc-1-P and ATP. This Hordeum vulgare (Barley) protein is Glucose-1-phosphate adenylyltransferase large subunit 1, chloroplastic/amyloplastic.